The chain runs to 427 residues: Trigger factor (427 aa).

Residues 163–248 (GDTVVIDFVG…IHEVKAKEVP (86 aa)) form the PPIase FKBP-type domain.

The protein belongs to the FKBP-type PPIase family. Tig subfamily.

Its subcellular location is the cytoplasm. It catalyses the reaction [protein]-peptidylproline (omega=180) = [protein]-peptidylproline (omega=0). Involved in protein export. Acts as a chaperone by maintaining the newly synthesized protein in an open conformation. Functions as a peptidyl-prolyl cis-trans isomerase. This chain is Trigger factor, found in Streptococcus pneumoniae (strain CGSP14).